The chain runs to 1043 residues: Isoleucine--tRNA ligase (1043 aa).

Positions 49–59 match the 'HIGH' region motif; sequence PFATGLPHYGH. The 'KMSKS' region motif lies at 592–596; sequence KMSKR. An ATP-binding site is contributed by lysine 595.

The protein belongs to the class-I aminoacyl-tRNA synthetase family. IleS type 2 subfamily. In terms of assembly, monomer. It depends on Zn(2+) as a cofactor.

Its subcellular location is the cytoplasm. It carries out the reaction tRNA(Ile) + L-isoleucine + ATP = L-isoleucyl-tRNA(Ile) + AMP + diphosphate. In terms of biological role, catalyzes the attachment of isoleucine to tRNA(Ile). As IleRS can inadvertently accommodate and process structurally similar amino acids such as valine, to avoid such errors it has two additional distinct tRNA(Ile)-dependent editing activities. One activity is designated as 'pretransfer' editing and involves the hydrolysis of activated Val-AMP. The other activity is designated 'posttransfer' editing and involves deacylation of mischarged Val-tRNA(Ile). The chain is Isoleucine--tRNA ligase from Chlamydia caviae (strain ATCC VR-813 / DSM 19441 / 03DC25 / GPIC) (Chlamydophila caviae).